The chain runs to 633 residues: Basic helix-loop-helix ARNT-like protein 1 (633 aa).

The segment at Met-1–His-65 is disordered. Position 17 is a phosphoserine; by GSK3-beta (Ser-17). Polar residues predominate over residues Ile-24 to Met-33. The Nuclear localization signal motif lies at Asn-36–Gly-41. The bHLH domain maps to Asn-79–Leu-132. Position 85 is a phosphoserine (Ser-85). Residue Ser-97 is modified to Phosphoserine; by CK2. The Nuclear export signal 1 signature appears at Leu-149–Leu-159. The PAS 1 domain maps to Ser-150–Pro-222. Lys-259 participates in a covalent cross-link: Glycyl lysine isopeptide (Lys-Gly) (interchain with G-Cter in SUMO2 and SUMO3). Lys-266 participates in a covalent cross-link: Glycyl lysine isopeptide (Lys-Gly) (interchain with G-Cter in SUMO). The region spanning Pro-333 to Arg-403 is the PAS 2 domain. A Nuclear export signal 2 motif is present at residues Leu-368–Leu-376. A PAC domain is found at Thr-408 to Asn-451. 2 disordered regions span residues Ser-472–Ala-499 and Gly-518–Ile-555. The span at Gly-518 to Pro-528 shows a compositional bias: low complexity. Lys-545 is modified (N6-acetyllysine).

Component of the circadian clock oscillator which includes the CRY1/2 proteins, CLOCK or NPAS2, BMAL1 or BMAL2, CSNK1D and/or CSNK1E, TIMELESS and the PER1/2/3 proteins. Forms a heterodimer with CLOCK. The CLOCK-BMAL1 heterodimer is required for E-box-dependent transactivation, for CLOCK nuclear translocation and degradation, and, for phosphorylation of both CLOCK and BMAL1. Interacts with PER1, PER2, CRY1 and CRY2 and this interaction requires a translocation to the nucleus. Interaction of the CLOCK-BMAL1 heterodimer with PER or CRY inhibits transcription activation. Ubiquitinated, leading to its proteasomal degradation. Deubiquitinated by USP9X. Post-translationally, O-glycosylated; contains O-GlcNAc. O-glycosylation by OGT prevents protein degradation by inhibiting ubiquitination. It also stabilizes the CLOCK-BMAL1 heterodimer thereby increasing CLOCK-BMAL1-mediated transcription of genes in the negative loop of the circadian clock such as PER1/2/3 and CRY1/2. In terms of processing, acetylated on Lys-545 by CLOCK during the repression phase of the circadian cycle. Acetylation facilitates recruitment of CRY1 protein and initiates the repression phase of the circadian cycle. Acetylated at Lys-545 by KAT5 during the activation phase of the cycle, leading to recruitment of the positive transcription elongation factor b (P-TEFb) and BRD4, followed by productive elongation of circadian transcripts. Deacetylated by SIRT1, which may result in decreased protein stability. Phosphorylated upon dimerization with CLOCK. Phosphorylation enhances the transcriptional activity, alters the subcellular localization and decreases the stability of the CLOCK-BMAL1 heterodimer by promoting its degradation. Phosphorylation shows circadian variations in the liver with a peak between CT10 to CT14. Phosphorylation at Ser-97 by CK2 is essential for its nuclear localization, its interaction with CLOCK and controls CLOCK nuclear entry. Dephosphorylation at Ser-85 is important for dimerization with CLOCK and transcriptional activity. Post-translationally, sumoylated on Lys-266 upon dimerization with CLOCK. Predominantly conjugated to poly-SUMO2/3 rather than SUMO1 and the level of these conjugates undergo rhythmic variation, peaking at CT9-CT12. Sumoylation localizes it exclusively to the PML body and promotes its ubiquitination in the PML body, ubiquitin-dependent proteasomal degradation and the transcriptional activity of the CLOCK-BMAL1 heterodimer. In terms of processing, undergoes lysosome-mediated degradation in a time-dependent manner in the liver.

Its subcellular location is the nucleus. The protein resides in the cytoplasm. It localises to the PML body. Functionally, transcriptional activator which forms a core component of the circadian clock. The circadian clock, an internal time-keeping system, regulates various physiological processes through the generation of approximately 24 hour circadian rhythms in gene expression, which are translated into rhythms in metabolism and behavior. It is derived from the Latin roots 'circa' (about) and 'diem' (day) and acts as an important regulator of a wide array of physiological functions including metabolism, sleep, body temperature, blood pressure, endocrine, immune, cardiovascular, and renal function. Consists of two major components: the central clock, residing in the suprachiasmatic nucleus (SCN) of the brain, and the peripheral clocks that are present in nearly every tissue and organ system. Both the central and peripheral clocks can be reset by environmental cues, also known as Zeitgebers (German for 'timegivers'). The predominant Zeitgeber for the central clock is light, which is sensed by retina and signals directly to the SCN. The central clock entrains the peripheral clocks through neuronal and hormonal signals, body temperature and feeding-related cues, aligning all clocks with the external light/dark cycle. Circadian rhythms allow an organism to achieve temporal homeostasis with its environment at the molecular level by regulating gene expression to create a peak of protein expression once every 24 hours to control when a particular physiological process is most active with respect to the solar day. Transcription and translation of core clock components (CLOCK, NPAS2, BMAL1, BMAL2, PER1, PER2, PER3, CRY1 and CRY2) plays a critical role in rhythm generation, whereas delays imposed by post-translational modifications (PTMs) are important for determining the period (tau) of the rhythms (tau refers to the period of a rhythm and is the length, in time, of one complete cycle). A diurnal rhythm is synchronized with the day/night cycle, while the ultradian and infradian rhythms have a period shorter and longer than 24 hours, respectively. Disruptions in the circadian rhythms contribute to the pathology of cardiovascular diseases, cancer, metabolic syndromes and aging. A transcription/translation feedback loop (TTFL) forms the core of the molecular circadian clock mechanism. Transcription factors, CLOCK or NPAS2 and BMAL1 or BMAL2, form the positive limb of the feedback loop, act in the form of a heterodimer and activate the transcription of core clock genes and clock-controlled genes (involved in key metabolic processes), harboring E-box elements (5'-CACGTG-3') within their promoters. The core clock genes: PER1/2/3 and CRY1/2 which are transcriptional repressors form the negative limb of the feedback loop and interact with the CLOCK|NPAS2-BMAL1|BMAL2 heterodimer inhibiting its activity and thereby negatively regulating their own expression. This heterodimer also activates nuclear receptors NR1D1/2 and RORA/B/G, which form a second feedback loop and which activate and repress BMAL1 transcription, respectively. The preferred binding motif for the CLOCK-BMAL1 heterodimer is 5'-CACGTGA-3', which contains a flanking adenine nucleotide at the 3-prime end of the canonical 6-nucleotide E-box sequence. CLOCK specifically binds to the half-site 5'-CAC-3', while BMAL1 binds to the half-site 5'-GTGA-3'. Essential for the rhythmic interaction of CLOCK with ASS1 and plays a critical role in positively regulating CLOCK-mediated acetylation of ASS1. Plays a role in protecting against lethal sepsis by limiting the expression of immune checkpoint protein CD274 in macrophages in a PKM2-dependent manner. In Tyto alba (Barn owl), this protein is Basic helix-loop-helix ARNT-like protein 1 (BMAL1).